The primary structure comprises 82 residues: Small ribosomal subunit protein uS17 (82 aa).

Belongs to the universal ribosomal protein uS17 family. As to quaternary structure, part of the 30S ribosomal subunit.

Functionally, one of the primary rRNA binding proteins, it binds specifically to the 5'-end of 16S ribosomal RNA. The chain is Small ribosomal subunit protein uS17 from Aeromonas salmonicida (strain A449).